The sequence spans 253 residues: uncharacterized protein (253 aa).

It belongs to the A.longa ORF167/ORF288 family.

The protein resides in the plastid. This is an uncharacterized protein from Euglena longa (Euglenophycean alga).